Consider the following 927-residue polypeptide: LPS-assembly protein LptD (927 aa).

An N-terminal signal peptide occupies residues 1-22 (MALKSPAFRKKFPLLVTGSLLA). Residues 60–100 (LPPRPVHSTASVSSNGTVTSESSSSGEQVAGPQLVTEAKGK) are disordered. A compositionally biased stretch (low complexity) spans 70–86 (SVSSNGTVTSESSSSGE).

Belongs to the LptD family. Component of the lipopolysaccharide transport and assembly complex. Interacts with LptE and LptA.

It localises to the cell outer membrane. In terms of biological role, together with LptE, is involved in the assembly of lipopolysaccharide (LPS) at the surface of the outer membrane. This Pseudomonas syringae pv. tomato (strain ATCC BAA-871 / DC3000) protein is LPS-assembly protein LptD.